The chain runs to 1172 residues: Putative cadmium/zinc-transporting ATPase HMA4 (1172 aa).

Over 1 to 93 (MALQNKEEEK…VRVNGETSFK (93 aa)) the chain is Cytoplasmic. The HMA domain occupies 17–83 (QKSYFDVLGI…ALNEARLEAN (67 aa)). The chain crosses the membrane as a helical span at residues 94-115 (NKWPSPFAVVSGLLLLLSFLKF). Topologically, residues 116–118 (VYS) are extracellular. A helical transmembrane segment spans residues 119-138 (PLRWLAVAAVAAGIYPILAK). Residues 139-145 (AFASIKR) lie on the Cytoplasmic side of the membrane. The helical transmembrane segment at 146–166 (PRIDINILVIITVIATLAMQD) threads the bilayer. Phe167 is a topological domain (extracellular). A helical transmembrane segment spans residues 168–188 (MEAAAVVFLFTISDWLETRAS). Residues 189–314 (YKATSVMQSL…KTKSQRLIDK (126 aa)) are Cytoplasmic-facing. The helical transmembrane segment at 315–337 (CSQYYTPAIILVSACVAIVPVIM) threads the bilayer. Residues 338–345 (KVHNLKHW) are Extracellular-facing. A helical membrane pass occupies residues 346–363 (FHLALVVLVSGCPCGLIL). The Cytoplasmic segment spans residues 364 to 656 (STPVATFCAL…KLARRARRKV (293 aa)). The 4-aspartylphosphate intermediate role is filled by Asp401. Mg(2+) contacts are provided by Asp601 and Asp605. A helical membrane pass occupies residues 657-676 (VENVCLSIILKAGILALAFA). The Extracellular portion of the chain corresponds to 677-680 (GHPL). A helical membrane pass occupies residues 681-700 (IWAAVLVDVGTCLLVIFNSM). The Cytoplasmic segment spans residues 701–1172 (LLLREKKKIG…HHHHHHHVSA (472 aa)).

The protein belongs to the cation transport ATPase (P-type) (TC 3.A.3) family. Type IB subfamily.

The protein localises to the membrane. The catalysed reaction is Zn(2+)(in) + ATP + H2O = Zn(2+)(out) + ADP + phosphate + H(+). The enzyme catalyses Cd(2+)(in) + ATP + H2O = Cd(2+)(out) + ADP + phosphate + H(+). Involved in cadmium/zinc transport. The polypeptide is Putative cadmium/zinc-transporting ATPase HMA4 (HMA4) (Arabidopsis thaliana (Mouse-ear cress)).